Reading from the N-terminus, the 349-residue chain is Aminomethyltransferase (349 aa).

Belongs to the GcvT family. In terms of assembly, the glycine cleavage system is composed of four proteins: P, T, L and H.

The catalysed reaction is N(6)-[(R)-S(8)-aminomethyldihydrolipoyl]-L-lysyl-[protein] + (6S)-5,6,7,8-tetrahydrofolate = N(6)-[(R)-dihydrolipoyl]-L-lysyl-[protein] + (6R)-5,10-methylene-5,6,7,8-tetrahydrofolate + NH4(+). The glycine cleavage system catalyzes the degradation of glycine. This is Aminomethyltransferase from Thermus thermophilus (strain ATCC BAA-163 / DSM 7039 / HB27).